Here is a 1657-residue protein sequence, read N- to C-terminus: Endoribonuclease Dicer homolog 4 (1657 aa).

Low complexity predominate over residues Met-1–Ala-14. The interval Met-1–Pro-26 is disordered. The 178-residue stretch at Leu-37–Arg-214 folds into the Helicase ATP-binding domain. Leu-50–Thr-57 serves as a coordination point for ATP. Residues Asp-157–His-160 carry the DECH box motif. In terms of domain architecture, Helicase C-terminal spans Asn-400 to Glu-567. One can recognise a Dicer dsRNA-binding fold domain in the interval Ser-585–Lys-675. In terms of domain architecture, PAZ spans Asp-856–Val-978. RNase III domains lie at Asp-1010–Gly-1173 and Ile-1214–Gly-1358. Glu-1252, Asp-1344, and Glu-1347 together coordinate Mg(2+). The DRBM 1 domain maps to Asn-1384–Asn-1451. A disordered region spans residues Gly-1525–Ser-1556. Polar residues predominate over residues Asn-1533 to Arg-1547. Positions Thr-1569–Gln-1645 constitute a DRBM 2 domain.

This sequence belongs to the helicase family. Dicer subfamily. May interact with ARGONAUTE1 or PINHEAD through their common PAZ domains. It depends on Mg(2+) as a cofactor. Mn(2+) serves as cofactor. As to expression, expressed in roots, leaf blades, leaf sheaths, shoot apices and spikelets.

It is found in the nucleus. In terms of biological role, involved in the RNA silencing pathway. Cleaves double-stranded RNA to produce small interfering RNAs (siRNAs) which target the selective destruction of complementary RNAs. Required for the production of 21 nucleotide siRNAs. Regulates shoot apical meristem (SAM) initiation and maintenance, leaf polarization and lemma polarity through the trans-acting siRNAS (ta-siRNAs) pathway, which probably modulate the expression of the ARF2, ARF3, ARF4, ARF14 and ARF15 genes. Can process endogenous 21 nucleotide siRNAs derived from an imperfect inverted repeat. May not be involved in microRNAs (miRNAs) production. This is Endoribonuclease Dicer homolog 4 (DCL4) from Oryza sativa subsp. japonica (Rice).